We begin with the raw amino-acid sequence, 400 residues long: tRNA (guanine-N(7)-)-methyltransferase (400 aa).

The S-adenosyl-L-methionine site is built by E124, E149, and D176. D232 contributes to the substrate binding site.

This sequence belongs to the class I-like SAM-binding methyltransferase superfamily. TrmB family.

It catalyses the reaction guanosine(46) in tRNA + S-adenosyl-L-methionine = N(7)-methylguanosine(46) in tRNA + S-adenosyl-L-homocysteine. It functions in the pathway tRNA modification; N(7)-methylguanine-tRNA biosynthesis. Functionally, catalyzes the formation of N(7)-methylguanine at position 46 (m7G46) in tRNA. The chain is tRNA (guanine-N(7)-)-methyltransferase from Helicobacter pylori (strain J99 / ATCC 700824) (Campylobacter pylori J99).